The following is a 364-amino-acid chain: UDP-N-acetylglucosamine--N-acetylmuramyl-(pentapeptide) pyrophosphoryl-undecaprenol N-acetylglucosamine transferase (364 aa).

UDP-N-acetyl-alpha-D-glucosamine is bound by residues 10-12, asparagine 124, arginine 166, serine 196, and glutamine 297; that span reads TGG.

It belongs to the glycosyltransferase 28 family. MurG subfamily.

The protein resides in the cell membrane. The catalysed reaction is di-trans,octa-cis-undecaprenyl diphospho-N-acetyl-alpha-D-muramoyl-L-alanyl-D-glutamyl-meso-2,6-diaminopimeloyl-D-alanyl-D-alanine + UDP-N-acetyl-alpha-D-glucosamine = di-trans,octa-cis-undecaprenyl diphospho-[N-acetyl-alpha-D-glucosaminyl-(1-&gt;4)]-N-acetyl-alpha-D-muramoyl-L-alanyl-D-glutamyl-meso-2,6-diaminopimeloyl-D-alanyl-D-alanine + UDP + H(+). The protein operates within cell wall biogenesis; peptidoglycan biosynthesis. Functionally, cell wall formation. Catalyzes the transfer of a GlcNAc subunit on undecaprenyl-pyrophosphoryl-MurNAc-pentapeptide (lipid intermediate I) to form undecaprenyl-pyrophosphoryl-MurNAc-(pentapeptide)GlcNAc (lipid intermediate II). The sequence is that of UDP-N-acetylglucosamine--N-acetylmuramyl-(pentapeptide) pyrophosphoryl-undecaprenol N-acetylglucosamine transferase from Caldanaerobacter subterraneus subsp. tengcongensis (strain DSM 15242 / JCM 11007 / NBRC 100824 / MB4) (Thermoanaerobacter tengcongensis).